The chain runs to 1122 residues: RecBCD enzyme subunit RecC (1122 aa).

This sequence belongs to the RecC family. In terms of assembly, heterotrimer of RecB, RecC and RecD. All subunits contribute to DNA-binding. Interacts with YgbT (Cas1). (Microbial infection) Lambda virus GamS protein interacts with the enzyme without displacing any of the subunits.

After reacting with DNA bearing a Chi site the holoenzyme is disassembled and loses exonuclease activity, DNA unwinding and Chi-directed DNA cleavage; RecB remains complexed with ssDNA, which may prevent holoenzyme reassembly. High levels of Mg(2+) (13 mM MgCl(2+)) or incubation with DNase allow holoenzyme reassembly, suggesting it is DNA bound to RecB that prevents reassembly. With respect to regulation, (Microbial infection) RecBCD is inhibited by the lambda virus gam protein (both GamL and GamS isoforms); in vitro a short preincubation prior to adding DNA results in maximal inhibition. In terms of biological role, a helicase/nuclease that prepares dsDNA breaks (DSB) for recombinational DNA repair. Binds to DSBs and unwinds DNA via a rapid (&gt;1 kb/second) and highly processive (&gt;30 kb) ATP-dependent bidirectional helicase. Unwinds dsDNA until it encounters a Chi (crossover hotspot instigator, 5'-GCTGGTGG-3') sequence from the 3' direction. Cuts ssDNA a few nucleotides 3' to Chi site, by nicking one strand or switching the strand degraded (depending on the reaction conditions). The properties and activities of the enzyme are changed at Chi. The Chi-altered holoenzyme produces a long 3'-ssDNA overhang which facilitates RecA-binding to the ssDNA for homologous DNA recombination and repair. Holoenzyme degrades any linearized DNA that is unable to undergo homologous recombination. In the holoenzyme this subunit almost certainly recognizes the wild-type Chi sequence, when added to isolated RecB increases its ATP-dependent helicase processivity. The RecBC complex requires the RecD subunit for nuclease activity, but can translocate along ssDNA in both directions. The RecBCD complex does not unwind G-quadruplex DNA. This Escherichia coli (strain K12) protein is RecBCD enzyme subunit RecC.